A 260-amino-acid chain; its full sequence is MAAAALRRFWSRRRAEAGDAVVAKPGVWARLGSWARALLRDYAEACRDASAEARARPGRAAVYVGLLGGAAACFTLAPSEGAFEEALLEASGTLLLLAPATRNRESEAFVQRLLWLRGRGRLRYVNLGLCSLVYEAPFDAQASLYQARCRYLQPRWTDFPGRVLDVGFVGRWWVLGAWMRDCDINDDEFLHLPAHLRVVGPQQLHSETNERLFDEKYKPVVLTDDQVDQALWEEQVLQKEKKDRLALSQAHSLVQAEAPR.

Residues 1-31 (MAAAALRRFWSRRRAEAGDAVVAKPGVWARL) constitute a mitochondrion transit peptide. Residues 32-59 (GSWARALLRDYAEACRDASAEARARPGR) lie on the Mitochondrial matrix side of the membrane. Residues 60-77 (AAVYVGLLGGAAACFTLA) form a helical membrane-spanning segment. Residues 78-260 (PSEGAFEEAL…HSLVQAEAPR (183 aa)) lie on the Mitochondrial intermembrane side of the membrane.

As to quaternary structure, component of the TIM22 complex, which core is composed of TIMM22, associated with TIMM10 (TIMM10A and/or TIMM10B), TIMM9, AGK and TIMM29. Interacts with TIMM10B; the interaction is direct. Interacts with TOMM40; linking the TIM22 complex to the TOM complex. Interacts with TIMM22 (when oxidized); the interaction is direct.

It is found in the mitochondrion inner membrane. In terms of biological role, component of the TIM22 complex, a complex that mediates the import and insertion of multi-pass transmembrane proteins into the mitochondrial inner membrane. The TIM22 complex forms a twin-pore translocase that uses the membrane potential as the external driving force. Required for the stability of the TIM22 complex and functions in the assembly of the TIMM22 protein into the TIM22 complex. May facilitate cooperation between TIM22 and TOM complexes by interacting with TOMM40. This is Mitochondrial import inner membrane translocase subunit Tim29 from Homo sapiens (Human).